Consider the following 354-residue polypeptide: Stearoyl-CoA desaturase (354 aa).

The tract at residues 1–28 (MPGHLLQEEMTSSYTTTTTTITEPPSES) is disordered. Over 1–67 (MPGHLLQEEM…EGPPPKLEYV (67 aa)) the chain is Cytoplasmic. The segment covering 8–28 (EEMTSSYTTTTTTITEPPSES) has biased composition (low complexity). The chain crosses the membrane as a helical span at residues 68–88 (WRNIILMALLHLGALYGLVLV). Asparagine 70 contributes to the substrate binding site. At 89–92 (PSSK) the chain is on the lumenal side. A helical transmembrane segment spans residues 93–113 (VYTLLWAFVYYVISIEGIGAG). Residues 114–212 (VHRLWSHRTY…EKLVMFQRRY (99 aa)) lie on the Cytoplasmic side of the membrane. Residues histidine 115 and histidine 120 each contribute to the Fe cation site. Residues 115-120 (HRLWSH) carry the Histidine box-1 motif. Positions 143, 150, and 151 each coordinate substrate. Histidine 152, histidine 155, and histidine 156 together coordinate Fe cation. Positions 152–156 (HRAHH) match the Histidine box-2 motif. 2 residues coordinate substrate: arginine 183 and lysine 184. Serine 198 carries the phosphoserine modification. Residues 213–232 (YKPAILLMCFILPTFVPWYF) traverse the membrane as a helical segment. The Lumenal portion of the chain corresponds to 233–236 (WGEA). The helical transmembrane segment at 237–258 (FVNSLCVSTFLRYTLVLNATWL) threads the bilayer. Tryptophan 257 provides a ligand contact to substrate. The Cytoplasmic portion of the chain corresponds to 259 to 354 (VNSAAHLYGY…RTGDGSCKSG (96 aa)). Fe cation contacts are provided by histidine 264, histidine 293, histidine 296, and histidine 297. The short motif at 293-297 (HNYHH) is the Histidine box-3 element.

Belongs to the fatty acid desaturase type 1 family. It depends on Fe(2+) as a cofactor.

It localises to the endoplasmic reticulum membrane. The enzyme catalyses octadecanoyl-CoA + 2 Fe(II)-[cytochrome b5] + O2 + 2 H(+) = (9Z)-octadecenoyl-CoA + 2 Fe(III)-[cytochrome b5] + 2 H2O. The catalysed reaction is hexadecanoyl-CoA + 2 Fe(II)-[cytochrome b5] + O2 + 2 H(+) = (9Z)-hexadecenoyl-CoA + 2 Fe(III)-[cytochrome b5] + 2 H2O. Its function is as follows. Stearoyl-CoA desaturase that utilizes O(2) and electrons from reduced cytochrome b5 to introduce the first double bond into saturated fatty acyl-CoA substrates. Catalyzes the insertion of a cis double bond at the delta-9 position into fatty acyl-CoA substrates including palmitoyl-CoA and stearoyl-CoA. Gives rise to a mixture of 16:1 and 18:1 unsaturated fatty acids. Plays an important role in lipid biosynthesis. Plays an important role in regulating the expression of genes that are involved in lipogenesis and in regulating mitochondrial fatty acid oxidation. Plays an important role in body energy homeostasis. Contributes to the biosynthesis of membrane phospholipids, cholesterol esters and triglycerides. This Mesocricetus auratus (Golden hamster) protein is Stearoyl-CoA desaturase (SCD).